A 188-amino-acid polypeptide reads, in one-letter code: Photosystem I assembly protein Ycf4 (188 aa).

The next 2 membrane-spanning stretches (helical) occupy residues 26 to 46 (IWWG…GLSS) and 70 to 90 (LLFY…TIIL).

It belongs to the Ycf4 family.

It is found in the cellular thylakoid membrane. Seems to be required for the assembly of the photosystem I complex. This chain is Photosystem I assembly protein Ycf4, found in Rippkaea orientalis (strain PCC 8801 / RF-1) (Cyanothece sp. (strain PCC 8801)).